Reading from the N-terminus, the 102-residue chain is ATP-dependent Clp protease adapter protein ClpS (102 aa).

Belongs to the ClpS family. As to quaternary structure, binds to the N-terminal domain of the chaperone ClpA.

Involved in the modulation of the specificity of the ClpAP-mediated ATP-dependent protein degradation. The sequence is that of ATP-dependent Clp protease adapter protein ClpS from Aromatoleum aromaticum (strain DSM 19018 / LMG 30748 / EbN1) (Azoarcus sp. (strain EbN1)).